The sequence spans 206 residues: Large ribosomal subunit protein uL3 (206 aa).

A disordered region spans residues 127–151; it reads SGGPSSHGSKFHRHLGGTGQATTPA.

Belongs to the universal ribosomal protein uL3 family. In terms of assembly, part of the 50S ribosomal subunit. Forms a cluster with proteins L14 and L19.

In terms of biological role, one of the primary rRNA binding proteins, it binds directly near the 3'-end of the 23S rRNA, where it nucleates assembly of the 50S subunit. This chain is Large ribosomal subunit protein uL3, found in Borreliella afzelii (strain PKo) (Borrelia afzelii).